Here is a 137-residue protein sequence, read N- to C-terminus: Large-conductance mechanosensitive channel (137 aa).

Helical transmembrane passes span 15–35 (VDLA…NSIV), 38–58 (IIMP…MFIQ), and 80–100 (GNFV…FLVV).

Belongs to the MscL family. Homopentamer.

The protein localises to the cell inner membrane. Channel that opens in response to stretch forces in the membrane lipid bilayer. May participate in the regulation of osmotic pressure changes within the cell. This is Large-conductance mechanosensitive channel from Brucella anthropi (strain ATCC 49188 / DSM 6882 / CCUG 24695 / JCM 21032 / LMG 3331 / NBRC 15819 / NCTC 12168 / Alc 37) (Ochrobactrum anthropi).